The following is a 222-amino-acid chain: Glutathione S-transferase A3 (222 aa).

Ala-2 carries the post-translational modification N-acetylalanine. A GST N-terminal domain is found at 3–83; sequence GKPKLHYFNG…YIASKYNLYG (81 aa). Position 4 is an N6-succinyllysine (Lys-4). Glutathione-binding positions include Tyr-9, Arg-45, 54–55, and 67–68; these read QV and QT. Residues 85-207 form the GST C-terminal domain; the sequence is DIKERALIDM…LQPGSPRKPP (123 aa).

This sequence belongs to the GST superfamily. Alpha family. Homodimer.

It is found in the cytoplasm. It catalyses the reaction RX + glutathione = an S-substituted glutathione + a halide anion + H(+). It carries out the reaction androst-5-ene-3,17-dione = androst-4-ene-3,17-dione. The enzyme catalyses pregn-5-ene-3,20-dione = progesterone. Conjugation of reduced glutathione to a wide number of exogenous and endogenous hydrophobic electrophiles. Catalyzes isomerization reactions that contribute to the biosynthesis of steroid hormones. Efficiently catalyze obligatory double-bond isomerizations of delta(5)-androstene-3,17-dione and delta(5)-pregnene-3,20-dione, precursors to testosterone and progesterone, respectively. Has substantial activity toward aflatoxin B1-8,9-epoxide. The sequence is that of Glutathione S-transferase A3 from Homo sapiens (Human).